Reading from the N-terminus, the 732-residue chain is MSEPMSERERWQLELDKLQRGLQGDPFAFLGPQRDPGGEGGVLRAYLPGAQRVELLDEDGATLAELEQSDPGSGLFQRHLERLPPRYRLRVHWPDGVQESEDPYAFGPLLGELDLYLFAEGNHRQLASCLGAQLTRHEGVEGVRFAVWAPNAVRVSVVGDFNGWDGRRHPMRRRYPSGVWELFVPRLGEGELYKYELQGHDGLLPLKADPLALACETPPGTASKTCAALRHEWRDQDWLARRAERQGYAAPLSIYEVHAGSWRHRDGRPPHWSELAEELIPYVRQLGFTHIELMPVMEHPFGGSWGYQPLGLFAPTARYGTPEDFAAFVDACHQAGIGVILDWVPAHFPTDAHGLGRFDGTALYEYEHPFEGFHQDWDTYIYNLGRSEVHGFMLASALHWLRTYHVDGLRVDAVASMLYRDYSRKEGEWLPNRHGGRENLEAIDFLHHLNQVVASETPGALVIAEESTAWPGVSRPVAEGGLGFSHKWNMGWMHDSLAYIGEDPLHRRYHHHQLTFGLLYAFSEHFILPISHDEVVHGKHSLLDKMPGDRWQKFANLRLYLSFMWSHPGKKLLFMGCEFGQWREWNHDGELDWYLLRYPEHQGVQDLVAALNRLYRELPALHARDGEALGFEWLIGDDQANSVYAWLRHAAGEPSLLAVHNFTPVPRQGYRIGVPQGGDWDVLLNSDAQAFAGSGAGSQGRVSSESCGAHGQAQSLVLDLPPLGTLLLRPAG.

The Nucleophile role is filled by Asp412. The Proton donor role is filled by Glu465.

Belongs to the glycosyl hydrolase 13 family. GlgB subfamily. As to quaternary structure, monomer.

It carries out the reaction Transfers a segment of a (1-&gt;4)-alpha-D-glucan chain to a primary hydroxy group in a similar glucan chain.. The protein operates within glycan biosynthesis; glycogen biosynthesis. Catalyzes the formation of the alpha-1,6-glucosidic linkages in glycogen by scission of a 1,4-alpha-linked oligosaccharide from growing alpha-1,4-glucan chains and the subsequent attachment of the oligosaccharide to the alpha-1,6 position. The chain is 1,4-alpha-glucan branching enzyme GlgB from Pseudomonas aeruginosa (strain ATCC 15692 / DSM 22644 / CIP 104116 / JCM 14847 / LMG 12228 / 1C / PRS 101 / PAO1).